A 400-amino-acid chain; its full sequence is Probable transposase for insertion sequence element ISRM3-like (400 aa).

This sequence belongs to the transposase mutator family.

Required for the transposition of the insertion element. This is Probable transposase for insertion sequence element ISRM3-like from Sinorhizobium fredii (strain NBRC 101917 / NGR234).